A 360-amino-acid polypeptide reads, in one-letter code: Hydroxycarboxylic acid receptor 2 (360 aa).

Topologically, residues 1-30 are extracellular; the sequence is MSKQNHFLVINGKNCCVFRDENIAKVLPPV. The chain crosses the membrane as a helical span at residues 31–51; it reads LGLEFVFGLLGNGLALWIFCF. Residues 52–60 lie on the Cytoplasmic side of the membrane; the sequence is HLKSWKSSR. A helical membrane pass occupies residues 61–81; that stretch reads IFLFNLAVADFLLIICLPFLT. The Extracellular portion of the chain corresponds to 82-98; it reads DNYVQNWDWRFGSIPCR. Cysteines 97 and 174 form a disulfide. A helical membrane pass occupies residues 99 to 119; it reads VMLFMLAMNRQGSIIFLTVVA. Residues 120 to 140 lie on the Cytoplasmic side of the membrane; that stretch reads VDRYFRVVHPHHFLNKISNRT. Residues 141-161 traverse the membrane as a helical segment; the sequence is AAIISCFLWGITIGLTVHLLY. At 162–189 the chain is on the extracellular side; the sequence is TDMMTRNGDANLCSSFSICYTFRWHDAM. A helical transmembrane segment spans residues 190–210; the sequence is FLLEFFLPLGIILFCSGRIIW. Residues 211-226 are Cytoplasmic-facing; it reads SLRQRQMDRHVKIKRA. The chain crosses the membrane as a helical span at residues 227–247; the sequence is INFIMVVAIVFVICFLPSVAV. Residues 248–270 lie on the Extracellular side of the membrane; the sequence is RIRIFWLLYKHNVRNCDIYSSVD. Residues 271-291 traverse the membrane as a helical segment; that stretch reads LAFFTTLSFTYMNSMLDPVVY. At 292-360 the chain is on the cytoplasmic side; the sequence is YFSSPSFPNF…SPPYLASTSR (69 aa). A disordered region spans residues 320–360; it reads NNRSTSVELTGDPSTIRSIPGALMTDPSEPGSPPYLASTSR. Over residues 321-336 the composition is skewed to polar residues; sequence NRSTSVELTGDPSTIR. A Phosphoserine modification is found at Ser325.

This sequence belongs to the G-protein coupled receptor 1 family. In terms of tissue distribution, expressed in adipose tissue, lung and spleen.

It localises to the cell membrane. Acts as a high affinity receptor for both nicotinic acid (also known as niacin) and (D)-beta-hydroxybutyrate and mediates increased adiponectin secretion and decreased lipolysis through G(i)-protein-mediated inhibition of adenylyl cyclase. This pharmacological effect requires nicotinic acid doses that are much higher than those provided by a normal diet. Mediates nicotinic acid-induced apoptosis in mature neutrophils. Receptor activation by nicotinic acid results in reduced cAMP levels which may affect activity of cAMP-dependent protein kinase A and phosphorylation of target proteins, leading to neutrophil apoptosis. The rank order of potency for the displacement of nicotinic acid binding is 5-methyl pyrazole-3-carboxylic acid = pyridine-3-acetic acid &gt; acifran &gt; 5-methyl nicotinic acid = acipimox &gt;&gt; nicotinuric acid = nicotinamide. This is Hydroxycarboxylic acid receptor 2 (Hcar2) from Rattus norvegicus (Rat).